We begin with the raw amino-acid sequence, 280 residues long: Transcription factor HES-1 (280 aa).

The interval 1 to 44 (MPADIMEKNSSSPVAATPASVNTTPDKPKTASEHRKSSKPIMEK) is disordered. A compositionally biased stretch (low complexity) spans 10 to 21 (SSSPVAATPASV). Basic and acidic residues predominate over residues 26–35 (DKPKTASEHR). The 58-residue stretch at 34–91 (HRKSSKPIMEKRRRARINESLSQLKTLILDALKKDSSRHSKLEKADILEMTVKHLRNL) folds into the bHLH domain. The Orange domain occupies 110 to 143 (YRAGFSECMNEVTRFLSTCEGVNTEVRTRLLGHL). Disordered stretches follow at residues 157-200 (GQPH…PPGG) and 254-280 (TSVG…PWRN). 2 stretches are compositionally biased toward pro residues: residues 164 to 174 (QAPPPPPPGPG) and 181 to 200 (FAPP…PPGG). Residues 254-271 (TSVGPNAVSPSSGPSLTA) show a composition bias toward polar residues. A WRPW motif motif is present at residues 275–278 (WRPW).

Transcription repression requires formation of a complex with a corepressor protein of the Groucho/TLE family. Interacts (via WPRW motif) with TLE1, and more weakly with TLE2. Interacts with HES6. Interacts with SIRT1. Interacts with an FA complex, composed of FANCA, FANCF, FANCG and FANCL, but not of FANCC, nor FANCE. In terms of processing, (Microbial infection) Ubiquitinated via human cytomegalovirus/HCMV protein IE1 that assembles a HES1 ubiquitination complex; leading to HES1 proteasomal degradation.

It is found in the nucleus. In terms of biological role, transcriptional repressor of genes that require a bHLH protein for their transcription. May act as a negative regulator of myogenesis by inhibiting the functions of MYOD1 and ASH1. Binds DNA on N-box motifs: 5'-CACNAG-3' with high affinity and on E-box motifs: 5'-CANNTG-3' with low affinity. May play a role in a functional FA core complex response to DNA cross-link damage, being required for the stability and nuclear localization of FA core complex proteins, as well as for FANCD2 monoubiquitination in response to DNA damage. This Homo sapiens (Human) protein is Transcription factor HES-1 (HES1).